The following is a 373-amino-acid chain: Phosphoserine aminotransferase (373 aa).

Residue arginine 46 coordinates L-glutamate. Phenylalanine 104, threonine 150, aspartate 172, and glutamine 195 together coordinate pyridoxal 5'-phosphate. Lysine 196 is subject to N6-(pyridoxal phosphate)lysine. Residue 247 to 248 (NT) participates in pyridoxal 5'-phosphate binding.

This sequence belongs to the class-V pyridoxal-phosphate-dependent aminotransferase family. SerC subfamily. Homodimer. Pyridoxal 5'-phosphate is required as a cofactor.

It is found in the cytoplasm. It carries out the reaction O-phospho-L-serine + 2-oxoglutarate = 3-phosphooxypyruvate + L-glutamate. It catalyses the reaction 4-(phosphooxy)-L-threonine + 2-oxoglutarate = (R)-3-hydroxy-2-oxo-4-phosphooxybutanoate + L-glutamate. The protein operates within amino-acid biosynthesis; L-serine biosynthesis; L-serine from 3-phospho-D-glycerate: step 2/3. It participates in cofactor biosynthesis; pyridoxine 5'-phosphate biosynthesis; pyridoxine 5'-phosphate from D-erythrose 4-phosphate: step 3/5. In terms of biological role, catalyzes the reversible conversion of 3-phosphohydroxypyruvate to phosphoserine and of 3-hydroxy-2-oxo-4-phosphonooxybutanoate to phosphohydroxythreonine. This is Phosphoserine aminotransferase from Rhodococcus opacus (strain B4).